The primary structure comprises 83 residues: Exodeoxyribonuclease 7 small subunit (83 aa).

This sequence belongs to the XseB family. As to quaternary structure, heterooligomer composed of large and small subunits.

It is found in the cytoplasm. It carries out the reaction Exonucleolytic cleavage in either 5'- to 3'- or 3'- to 5'-direction to yield nucleoside 5'-phosphates.. In terms of biological role, bidirectionally degrades single-stranded DNA into large acid-insoluble oligonucleotides, which are then degraded further into small acid-soluble oligonucleotides. This is Exodeoxyribonuclease 7 small subunit from Rhizobium meliloti (strain 1021) (Ensifer meliloti).